The primary structure comprises 330 residues: Flotillin-like protein FloA (330 aa).

The next 2 helical transmembrane spans lie at 6-26 (LLLFVIIAAGLIVLSIFFTFV) and 28-48 (VMLWISALAAGVRVSIFTLVG).

This sequence belongs to the flotillin-like FloA family. Homooligomerizes.

Its subcellular location is the cell membrane. The protein localises to the membrane raft. Found in functional membrane microdomains (FMM) that may be equivalent to eukaryotic membrane rafts. FMMs are highly dynamic and increase in number as cells age. Flotillins are thought to be important factors in membrane fluidity. This Bacillus pumilus (strain SAFR-032) protein is Flotillin-like protein FloA.